The primary structure comprises 383 residues: Queuine tRNA-ribosyltransferase (383 aa).

Catalysis depends on aspartate 95, which acts as the Proton acceptor. Substrate-binding positions include 95-99, aspartate 149, glutamine 195, and glycine 222; that span reads DSGGF. Positions 253–259 are RNA binding; sequence GVGSPDS. Catalysis depends on aspartate 272, which acts as the Nucleophile. Residues 277–281 are RNA binding; important for wobble base 34 recognition; the sequence is TRIAR. Residues cysteine 310, cysteine 312, cysteine 315, and histidine 341 each contribute to the Zn(2+) site.

The protein belongs to the queuine tRNA-ribosyltransferase family. As to quaternary structure, homodimer. Within each dimer, one monomer is responsible for RNA recognition and catalysis, while the other monomer binds to the replacement base PreQ1. Zn(2+) is required as a cofactor.

The catalysed reaction is 7-aminomethyl-7-carbaguanine + guanosine(34) in tRNA = 7-aminomethyl-7-carbaguanosine(34) in tRNA + guanine. Its pathway is tRNA modification; tRNA-queuosine biosynthesis. Functionally, catalyzes the base-exchange of a guanine (G) residue with the queuine precursor 7-aminomethyl-7-deazaguanine (PreQ1) at position 34 (anticodon wobble position) in tRNAs with GU(N) anticodons (tRNA-Asp, -Asn, -His and -Tyr). Catalysis occurs through a double-displacement mechanism. The nucleophile active site attacks the C1' of nucleotide 34 to detach the guanine base from the RNA, forming a covalent enzyme-RNA intermediate. The proton acceptor active site deprotonates the incoming PreQ1, allowing a nucleophilic attack on the C1' of the ribose to form the product. After dissociation, two additional enzymatic reactions on the tRNA convert PreQ1 to queuine (Q), resulting in the hypermodified nucleoside queuosine (7-(((4,5-cis-dihydroxy-2-cyclopenten-1-yl)amino)methyl)-7-deazaguanosine). The chain is Queuine tRNA-ribosyltransferase from Shouchella clausii (strain KSM-K16) (Alkalihalobacillus clausii).